Consider the following 320-residue polypeptide: MPTGDFDSKPSWADQVEEEGEDDKCVTSELLKGIPLATGDTSLEPELLPGAPLPPPKEVINGNIKTVTEYRIDEDGKKFKIVRTFRIETRKASKAVARRKNWKKFGNSEFDPPGPNVATTTVSDDVSMTFITSKEDLNCQEEEDPMNKLKGQKIVSCRICKGDHWTTRCPYKDTLGPMQKELAEQLGLSTGEKEKLPGELEPVQATQNKTGKYVPPSLRDGASRRGESMQPNRRADDNATIRVTNLSEDTRETDLQELFRPFGSISRIYLAKDKTTGQSKGFAFISFHRREDAARAIAGVSGFGYDHLILNVEWAKPSTN.

The segment at 1 to 25 (MPTGDFDSKPSWADQVEEEGEDDKC) is disordered. Residues Ser-8 and Ser-11 each carry the phosphoserine modification. Thr-38 and Thr-41 each carry phosphothreonine. Ser-42, Ser-189, Ser-223, and Ser-264 each carry phosphoserine. Positions 209–234 (KTGKYVPPSLRDGASRRGESMQPNRR) are disordered. A compositionally biased stretch (basic and acidic residues) spans 221–234 (GASRRGESMQPNRR). Residues 239-317 (ATIRVTNLSE…LILNVEWAKP (79 aa)) enclose the RRM domain.

Belongs to the eIF-3 subunit G family. In terms of assembly, component of the eukaryotic translation initiation factor 3 (eIF-3) complex, which is composed of 13 subunits: EIF3A, EIF3B, EIF3C, EIF3D, EIF3E, EIF3F, EIF3G, EIF3H, EIF3I, EIF3J, EIF3K, EIF3L and EIF3M. The eIF-3 complex appears to include 3 stable modules: module A is composed of EIF3A, EIF3B, EIF3G and EIF3I; module B is composed of EIF3F, EIF3H, and EIF3M; and module C is composed of EIF3C, EIF3D, EIF3E, EIF3K and EIF3L. EIF3C of module C binds EIF3B of module A and EIF3H of module B, thereby linking the three modules. EIF3J is a labile subunit that binds to the eIF-3 complex via EIF3B. The eIF-3 complex interacts with RPS6KB1 under conditions of nutrient depletion. Mitogenic stimulation leads to binding and activation of a complex composed of FRAP1 and RAPTOR, leading to phosphorylation and release of RPS6KB1 and binding of EIF4B to eIF-3. Interacts (via C-terminus) with AIFM1 (via N-terminus). Interacts with DHX33; the interaction is independent of RNA. Phosphorylated. Phosphorylation is enhanced upon serum stimulation.

The protein resides in the cytoplasm. It is found in the nucleus. The protein localises to the perinuclear region. In terms of biological role, RNA-binding component of the eukaryotic translation initiation factor 3 (eIF-3) complex, which is required for several steps in the initiation of protein synthesis. The eIF-3 complex associates with the 40S ribosome and facilitates the recruitment of eIF-1, eIF-1A, eIF-2:GTP:methionyl-tRNAi and eIF-5 to form the 43S pre-initiation complex (43S PIC). The eIF-3 complex stimulates mRNA recruitment to the 43S PIC and scanning of the mRNA for AUG recognition. The eIF-3 complex is also required for disassembly and recycling of post-termination ribosomal complexes and subsequently prevents premature joining of the 40S and 60S ribosomal subunits prior to initiation. The eIF-3 complex specifically targets and initiates translation of a subset of mRNAs involved in cell proliferation, including cell cycling, differentiation and apoptosis, and uses different modes of RNA stem-loop binding to exert either translational activation or repression. This subunit can bind 18S rRNA. This is Eukaryotic translation initiation factor 3 subunit G from Bos taurus (Bovine).